The sequence spans 489 residues: N-succinylglutamate 5-semialdehyde dehydrogenase (489 aa).

NAD(+) is bound at residue Gly-223–Gly-228. Active-site residues include Glu-246 and Cys-280.

It belongs to the aldehyde dehydrogenase family. AstD subfamily.

The enzyme catalyses N-succinyl-L-glutamate 5-semialdehyde + NAD(+) + H2O = N-succinyl-L-glutamate + NADH + 2 H(+). It functions in the pathway amino-acid degradation; L-arginine degradation via AST pathway; L-glutamate and succinate from L-arginine: step 4/5. Its function is as follows. Catalyzes the NAD-dependent reduction of succinylglutamate semialdehyde into succinylglutamate. In Aeromonas hydrophila subsp. hydrophila (strain ATCC 7966 / DSM 30187 / BCRC 13018 / CCUG 14551 / JCM 1027 / KCTC 2358 / NCIMB 9240 / NCTC 8049), this protein is N-succinylglutamate 5-semialdehyde dehydrogenase.